Reading from the N-terminus, the 501-residue chain is tRNA (guanine(37)-N(1))-methyltransferase (501 aa).

S-adenosyl-L-methionine-binding positions include H282, D320–L321, D348–G349, and N380. Residues L474–S501 are disordered.

This sequence belongs to the class I-like SAM-binding methyltransferase superfamily. TRM5/TYW2 family. Monomer.

The protein resides in the mitochondrion matrix. The protein localises to the nucleus. It is found in the cytoplasm. The catalysed reaction is guanosine(37) in tRNA + S-adenosyl-L-methionine = N(1)-methylguanosine(37) in tRNA + S-adenosyl-L-homocysteine + H(+). Its function is as follows. Involved in mitochondrial tRNA methylation. Specifically methylates the N1 position of guanosine-37 in various tRNAs. Methylation is not dependent on the nature of the nucleoside 5' of the target nucleoside. This is the first step in the biosynthesis of wybutosine (yW), a modified base adjacent to the anticodon of tRNAs and required for accurate decoding. This Mus musculus (Mouse) protein is tRNA (guanine(37)-N(1))-methyltransferase (Trmt5).